Consider the following 61-residue polypeptide: Large ribosomal subunit protein eL24 (61 aa).

The Zn(2+) site is built by C7, C10, C33, and C37. A C4-type zinc finger spans residues 7-37 (CSFCGHEIPPGTGLMYVRNDGTILWFCSSKC).

The protein belongs to the eukaryotic ribosomal protein eL24 family. Part of the 50S ribosomal subunit. Forms a cluster with proteins L3 and L14. Zn(2+) is required as a cofactor.

Binds to the 23S rRNA. The polypeptide is Large ribosomal subunit protein eL24 (Saccharolobus islandicus (strain Y.N.15.51 / Yellowstone #2) (Sulfolobus islandicus)).